The following is a 238-amino-acid chain: 7-cyano-7-deazaguanine synthase (238 aa).

12–22 (FSGGQDSGTCL) lines the ATP pocket. Zn(2+) contacts are provided by C200, C215, C218, and C221.

Belongs to the QueC family. Zn(2+) is required as a cofactor.

The enzyme catalyses 7-carboxy-7-deazaguanine + NH4(+) + ATP = 7-cyano-7-deazaguanine + ADP + phosphate + H2O + H(+). The protein operates within purine metabolism; 7-cyano-7-deazaguanine biosynthesis. Its function is as follows. Catalyzes the ATP-dependent conversion of 7-carboxy-7-deazaguanine (CDG) to 7-cyano-7-deazaguanine (preQ(0)). In Lawsonia intracellularis (strain PHE/MN1-00), this protein is 7-cyano-7-deazaguanine synthase.